The primary structure comprises 385 residues: MGIALCKPERDAAAKNRQIETQIRIENQANKRKIKMLLLGISDSGKSTIVKQMRVNYCNGFNETEVVNAIFLIRNNIIDAFKHISLLILDSHIIKSDTEKVLLKLFAFESQKIEMMQEVDELRLINSIRVLECISVFFEHYSYHPMIPDNIHYFFPHLERIAISEYMPTVEDLIHMRQTTLGVHEISFDYQTQTIRLIDVGGQKTERRKWIHFFEGVTAVMFVCSLSSFNQATEQEPNNAFAWETSLNKVQNKILVRSTGKAKQRPGMVNRLDESVDLFTSIRENNFLKSSNFMLFLNKIDLLGKKLETIQFVNHFPAYEQWITNDNSVQSVAEFIESMFREGLDADQKIYAHLTQATITTNIEYTFGLCCDVIFNKNIETLSLE.

A lipid anchor (N-myristoyl glycine) is attached at Gly-2. The S-palmitoyl cysteine moiety is linked to residue Cys-6. Residues 32-385 (RKIKMLLLGI…NKNIETLSLE (354 aa)) form the G-alpha domain. A G1 motif region spans residues 35–48 (KMLLLGISDSGKST). GTP is bound by residues 40–47 (GISDSGKS), 174–180 (IHMRQTT), 199–203 (DVGGQ), 298–301 (NKID), and Ala-357. Positions 47 and 180 each coordinate Mg(2+). The segment at 172–180 (DLIHMRQTT) is G2 motif. Positions 195 to 204 (IRLIDVGGQK) are G3 motif. Residues 294 to 301 (MLFLNKID) are G4 motif. The tract at residues 355–360 (TQATIT) is G5 motif.

This sequence belongs to the G-alpha family. In terms of assembly, g proteins are composed of 3 units; alpha, beta and gamma. The alpha chain contains the guanine nucleotide binding site.

Functionally, guanine nucleotide-binding proteins (G proteins) are involved as modulators or transducers in various transmembrane signaling systems. The sequence is that of Guanine nucleotide-binding protein alpha-5 subunit (gpa-5) from Caenorhabditis briggsae.